The chain runs to 384 residues: Putative glutamate--cysteine ligase 2 (384 aa).

It belongs to the glutamate--cysteine ligase type 2 family. YbdK subfamily.

It carries out the reaction L-cysteine + L-glutamate + ATP = gamma-L-glutamyl-L-cysteine + ADP + phosphate + H(+). Its function is as follows. ATP-dependent carboxylate-amine ligase which exhibits weak glutamate--cysteine ligase activity. The sequence is that of Putative glutamate--cysteine ligase 2 from Dechloromonas aromatica (strain RCB).